The sequence spans 393 residues: uncharacterized protein (393 aa).

8 consecutive transmembrane segments (helical) span residues I15–F35, W56–I76, F86–V106, A131–W151, L176–F196, L253–I273, L289–A309, and V349–W369.

It is found in the cell membrane. This is an uncharacterized protein from Mycoplasma genitalium (strain ATCC 33530 / DSM 19775 / NCTC 10195 / G37) (Mycoplasmoides genitalium).